A 205-amino-acid chain; its full sequence is MIGKLKGLIDSYAEDFVILDVGGVGYQVHCSARTLQALPSPGEAATLSIETYVREDQIKLFGFRSDVEREWFRLLQTVQGVGAKVALAVLGTLPPADLANAIALRDKAAVARTPGVGPKVAERIVTELKDKAPAFADVDPGVIRLSGAIEDSRAPQPIADAISALINLGYGQPQAAAAIAAASRAAGDKAETAQLIRLGLKELAK.

The tract at residues 1–64 is domain I; that stretch reads MIGKLKGLID…EDQIKLFGFR (64 aa). The tract at residues 65–143 is domain II; it reads SDVEREWFRL…AFADVDPGVI (79 aa). The segment at 144-154 is flexible linker; it reads RLSGAIEDSRA. Residues 154–205 are domain III; sequence APQPIADAISALINLGYGQPQAAAAIAAASRAAGDKAETAQLIRLGLKELAK.

It belongs to the RuvA family. In terms of assembly, homotetramer. Forms an RuvA(8)-RuvB(12)-Holliday junction (HJ) complex. HJ DNA is sandwiched between 2 RuvA tetramers; dsDNA enters through RuvA and exits via RuvB. An RuvB hexamer assembles on each DNA strand where it exits the tetramer. Each RuvB hexamer is contacted by two RuvA subunits (via domain III) on 2 adjacent RuvB subunits; this complex drives branch migration. In the full resolvosome a probable DNA-RuvA(4)-RuvB(12)-RuvC(2) complex forms which resolves the HJ.

It is found in the cytoplasm. In terms of biological role, the RuvA-RuvB-RuvC complex processes Holliday junction (HJ) DNA during genetic recombination and DNA repair, while the RuvA-RuvB complex plays an important role in the rescue of blocked DNA replication forks via replication fork reversal (RFR). RuvA specifically binds to HJ cruciform DNA, conferring on it an open structure. The RuvB hexamer acts as an ATP-dependent pump, pulling dsDNA into and through the RuvAB complex. HJ branch migration allows RuvC to scan DNA until it finds its consensus sequence, where it cleaves and resolves the cruciform DNA. In Bradyrhizobium sp. (strain BTAi1 / ATCC BAA-1182), this protein is Holliday junction branch migration complex subunit RuvA.